A 94-amino-acid chain; its full sequence is Cell division protein FtsB (94 aa).

Residues 1-3 (MRV) are Cytoplasmic-facing. The helical transmembrane segment at 4–21 (FALTLSLLLVWLLYTLMW) threads the bilayer. Residues 22–94 (GKNGVMDFRA…YRIIGEESRQ (73 aa)) are Periplasmic-facing. Residues 33-76 (QAEIEVQQQVNANLHLRNQEMFAEIDDLRQGLDAIEERARNELG) are a coiled coil.

It belongs to the FtsB family. As to quaternary structure, part of a complex composed of FtsB, FtsL and FtsQ.

Its subcellular location is the cell inner membrane. Its function is as follows. Essential cell division protein. May link together the upstream cell division proteins, which are predominantly cytoplasmic, with the downstream cell division proteins, which are predominantly periplasmic. The sequence is that of Cell division protein FtsB from Vibrio cholerae serotype O1 (strain ATCC 39315 / El Tor Inaba N16961).